A 311-amino-acid chain; its full sequence is Geranylgeranyl transferase type-2 subunit beta (311 aa).

5 PFTB repeats span residues 54 to 95 (KERI…AMLD), 102 to 143 (KDKV…AILG), 150 to 191 (KNTA…KILN), 197 to 239 (DEEL…AIIG), and 246 to 288 (RNQL…SLLQ). Residues 176 to 178 (HGA) and 218 to 230 (RPEK…YGWW) each bind geranylgeranyl diphosphate. Positions 224, 226, and 276 each coordinate Zn(2+).

This sequence belongs to the protein prenyltransferase subunit beta family. Heterodimer of an alpha and a beta subunit. The cofactor is Zn(2+).

It carries out the reaction geranylgeranyl diphosphate + L-cysteinyl-[protein] = S-geranylgeranyl-L-cysteinyl-[protein] + diphosphate. Its function is as follows. Catalyzes the transfer of a geranyl-geranyl moiety from geranyl-geranyl pyrophosphate to proteins having the C-terminal -XCC or -XCXC, where both cysteines may become modified. The sequence is that of Geranylgeranyl transferase type-2 subunit beta (ptb1) from Schizosaccharomyces pombe (strain 972 / ATCC 24843) (Fission yeast).